The following is a 238-amino-acid chain: Small ribosomal subunit protein uS2 (238 aa).

This sequence belongs to the universal ribosomal protein uS2 family.

In Prochlorococcus marinus (strain SARG / CCMP1375 / SS120), this protein is Small ribosomal subunit protein uS2.